We begin with the raw amino-acid sequence, 117 residues long: Small ribosomal subunit protein bS6 (117 aa).

It belongs to the bacterial ribosomal protein bS6 family.

Its function is as follows. Binds together with bS18 to 16S ribosomal RNA. The polypeptide is Small ribosomal subunit protein bS6 (Porphyromonas gingivalis (strain ATCC BAA-308 / W83)).